Here is a 287-residue protein sequence, read N- to C-terminus: ATP synthase gamma chain (287 aa).

The protein belongs to the ATPase gamma chain family. F-type ATPases have 2 components, CF(1) - the catalytic core - and CF(0) - the membrane proton channel. CF(1) has five subunits: alpha(3), beta(3), gamma(1), delta(1), epsilon(1). CF(0) has three main subunits: a, b and c.

Its subcellular location is the cell inner membrane. In terms of biological role, produces ATP from ADP in the presence of a proton gradient across the membrane. The gamma chain is believed to be important in regulating ATPase activity and the flow of protons through the CF(0) complex. This is ATP synthase gamma chain from Salmonella paratyphi A (strain ATCC 9150 / SARB42).